The chain runs to 448 residues: F-box/FBD/LRR-repeat protein At2g04230 (448 aa).

The 53-residue stretch at 12–64 folds into the F-box domain; that stretch reads EDRISDLPDALLLQILSSLPTENAIATSVLSKRWRSLWTMLPKLKFDSNFNPV. LRR repeat units lie at residues 72–98, 149–176, 177–202, 204–225, 226–251, 271–296, and 319–345; these read PTMF…HLSF, ILKL…YLDQ, VHFK…VVHR, SNAD…TIED, LRQE…NING, ISNV…ILHL, and THER…KLTD. Positions 359–410 constitute an FBD domain; that stretch reads KWNPPKCAPECLLFHLETFLWIGYEWQRGDEKEVATYILENARRLKKATFST.

This is F-box/FBD/LRR-repeat protein At2g04230 from Arabidopsis thaliana (Mouse-ear cress).